The sequence spans 304 residues: Acetylxylan esterase A (304 aa).

Residues 1 to 19 (MVKLQYLLSILLYAYSCTA) form the signal peptide. The Charge relay system role is filled by S147. N189 carries N-linked (GlcNAc...) asparagine glycosylation.

This sequence belongs to the carbohydrate esterase 1 (CE1) family. AxeA subfamily. Monomer.

It localises to the secreted. The catalysed reaction is Deacetylation of xylans and xylo-oligosaccharides.. Its pathway is glycan degradation; xylan degradation. In terms of biological role, acetylxylan esterase involved in the hydrolysis of xylan, a major structural heterogeneous polysaccharide found in plant biomass representing the second most abundant polysaccharide in the biosphere, after cellulose. Degrades acetylated xylans by cleaving acetyl side groups from the hetero-xylan backbone. The sequence is that of Acetylxylan esterase A (axeA) from Emericella nidulans (strain FGSC A4 / ATCC 38163 / CBS 112.46 / NRRL 194 / M139) (Aspergillus nidulans).